A 403-amino-acid polypeptide reads, in one-letter code: Argininosuccinate synthase (403 aa).

ATP contacts are provided by residues 10-18 and A37; that span reads AYSGGLDTS. An L-citrulline-binding site is contributed by Y89. G119 serves as a coordination point for ATP. 3 residues coordinate L-aspartate: T121, N125, and D126. Residue N125 coordinates L-citrulline. Positions 129, 178, 187, 263, and 275 each coordinate L-citrulline.

This sequence belongs to the argininosuccinate synthase family. Type 1 subfamily. Homotetramer.

Its subcellular location is the cytoplasm. It catalyses the reaction L-citrulline + L-aspartate + ATP = 2-(N(omega)-L-arginino)succinate + AMP + diphosphate + H(+). It functions in the pathway amino-acid biosynthesis; L-arginine biosynthesis; L-arginine from L-ornithine and carbamoyl phosphate: step 2/3. The chain is Argininosuccinate synthase from Idiomarina loihiensis (strain ATCC BAA-735 / DSM 15497 / L2-TR).